The sequence spans 232 residues: UPF0758 protein FN0909 (232 aa).

One can recognise an MPN domain in the interval lysine 110 to isoleucine 232. Residues histidine 181, histidine 183, and aspartate 194 each coordinate Zn(2+). Residues histidine 181–aspartate 194 carry the JAMM motif motif.

Belongs to the UPF0758 family.

The chain is UPF0758 protein FN0909 from Fusobacterium nucleatum subsp. nucleatum (strain ATCC 25586 / DSM 15643 / BCRC 10681 / CIP 101130 / JCM 8532 / KCTC 2640 / LMG 13131 / VPI 4355).